The sequence spans 500 residues: Hepatic triacylglycerol lipase (500 aa).

Residues 1–21 (MENPLCVSIFLFYCILIQSSA) form the signal peptide. The tract at residues 23–44 (GQSLGPESFGRRSRAAETNKTP) is disordered. Asn-67 and Asn-78 each carry an N-linked (GlcNAc...) asparagine glycan. The active-site Nucleophile is the Ser-168. Catalysis depends on Asp-194, which acts as the Charge relay system. The segment at 254-277 (CHFLELYKHFAKHGLNAITRTVKC) is essential for determining substrate specificity. His-279 serves as the catalytic Charge relay system. One can recognise a PLAT domain in the interval 353-487 (YHYQFKIRFI…HPAREKTFVR (135 aa)). Asn-363 and Asn-398 each carry an N-linked (GlcNAc...) asparagine glycan.

Belongs to the AB hydrolase superfamily. Lipase family. As to quaternary structure, homodimer.

It is found in the secreted. The enzyme catalyses a triacylglycerol + H2O = a diacylglycerol + a fatty acid + H(+). The catalysed reaction is a 1-acyl-sn-glycero-3-phosphocholine + H2O = sn-glycerol 3-phosphocholine + a fatty acid + H(+). It catalyses the reaction a 1,2-diacyl-sn-glycero-3-phosphocholine + H2O = a 2-acyl-sn-glycero-3-phosphocholine + a fatty acid + H(+). It carries out the reaction 1,2,3-tri-(9Z-octadecenoyl)-glycerol + H2O = di-(9Z)-octadecenoylglycerol + (9Z)-octadecenoate + H(+). The enzyme catalyses 1,2-di-(9Z-octadecenoyl)-sn-glycero-3-phosphocholine + H2O = (9Z-octadecenoyl)-sn-glycero-3-phosphocholine + (9Z)-octadecenoate + H(+). The catalysed reaction is 1,2,3-tributanoylglycerol + H2O = dibutanoylglycerol + butanoate + H(+). It catalyses the reaction 1,2-dihexadecanoyl-sn-glycero-3-phosphocholine + H2O = hexadecanoyl-sn-glycero-3-phosphocholine + hexadecanoate + H(+). It carries out the reaction 1,2-di-(9Z-octadecenoyl)-sn-glycerol + H2O = 2-(9Z-octadecenoyl)-glycerol + (9Z)-octadecenoate + H(+). The enzyme catalyses 1,2,3-tri-(9Z-octadecenoyl)-glycerol + H2O = 2,3-di-(9Z)-octadecenoyl-sn-glycerol + (9Z)-octadecenoate + H(+). The catalysed reaction is 1-(9Z-octadecenoyl)-sn-glycero-3-phospho-L-serine + H2O = sn-glycero-3-phospho-L-serine + (9Z)-octadecenoate + H(+). It catalyses the reaction 1-hexadecanoyl-sn-glycero-3-phosphocholine + H2O = sn-glycerol 3-phosphocholine + hexadecanoate + H(+). It carries out the reaction 1,3-di-(9Z-octadecenoyl)-glycerol + H2O = 3-(9Z-octadecenoyl)-sn-glycerol + (9Z)-octadecenoate + H(+). Its function is as follows. Catalyzes the hydrolysis of triglycerides and phospholipids present in circulating plasma lipoproteins, including chylomicrons, intermediate density lipoproteins (IDL), low density lipoproteins (LDL) of large size and high density lipoproteins (HDL), releasing free fatty acids (FFA) and smaller lipoprotein particles. Also exhibits lysophospholipase activity. Can hydrolyze both neutral lipid and phospholipid substrates but shows a greater binding affinity for neutral lipid substrates than phospholipid substrates. In native LDL, preferentially hydrolyzes the phosphatidylcholine species containing polyunsaturated fatty acids at sn-2 position. The protein is Hepatic triacylglycerol lipase (LIPC) of Bos taurus (Bovine).